Reading from the N-terminus, the 278-residue chain is Pantothenate synthetase (278 aa).

30–37 (MGGLHQGH) lines the ATP pocket. Histidine 37 acts as the Proton donor in catalysis. Glutamine 61 contributes to the (R)-pantoate binding site. A beta-alanine-binding site is contributed by glutamine 61. 146 to 149 (GQKD) serves as a coordination point for ATP. Residue glutamine 152 coordinates (R)-pantoate. ATP is bound by residues isoleucine 175 and 183–186 (MSTR).

It belongs to the pantothenate synthetase family. Homodimer.

The protein resides in the cytoplasm. The enzyme catalyses (R)-pantoate + beta-alanine + ATP = (R)-pantothenate + AMP + diphosphate + H(+). It participates in cofactor biosynthesis; (R)-pantothenate biosynthesis; (R)-pantothenate from (R)-pantoate and beta-alanine: step 1/1. Catalyzes the condensation of pantoate with beta-alanine in an ATP-dependent reaction via a pantoyl-adenylate intermediate. The sequence is that of Pantothenate synthetase from Ruthia magnifica subsp. Calyptogena magnifica.